The following is a 426-amino-acid chain: Probable serine/threonine-protein kinase PBL2 (426 aa).

Residues 1-54 (MGNCLDSSAKVDNSNHSPHANSASSGSKVSSKTSRSTGPSGLSTTSYSTDSSFG) form a disordered region. The N-myristoyl glycine moiety is linked to residue Gly-2. Cys-4 is lipidated: S-palmitoyl cysteine. Over residues 14–38 (SNHSPHANSASSGSKVSSKTSRSTG) the composition is skewed to low complexity. Residues 39–52 (PSGLSTTSYSTDSS) are compositionally biased toward polar residues. Thr-75 carries the phosphothreonine modification. Residues 86–369 (FRQDNLLGEG…SEVLVTLEQL (284 aa)) enclose the Protein kinase domain. ATP contacts are provided by residues 92 to 100 (LGEGGFGCV) and Lys-124. Tyr-169 bears the Phosphotyrosine mark. Asp-219 serves as the catalytic Proton acceptor. Ser-253 bears the O-UMP-serine mark. Ser-253 is subject to Phosphoserine. Residues Thr-254 and Thr-259 each carry the phosphothreonine modification. Thr-254 is subject to O-UMP-threonine. Tyr-267 is modified (phosphotyrosine). The interval 374–426 (KPGTKHTQMESPRFHHSSVMQKSPVRYSHDRPLLHMTPGASPLPSYTQSPRVR) is disordered. Polar residues predominate over residues 417–426 (PSYTQSPRVR).

Belongs to the protein kinase superfamily. Ser/Thr protein kinase family. In terms of assembly, interacts with FLS2. Interacts with the Xanthomonas campestris effector XopAC/AvrAC; the recognition of X.campestris effector XopAC/AvrAC requires the presence of RKS1 and RPP13L4/ZAR1. Component of a stable high-order oligomeric complex made of RKS1 and RPP13L4/ZAR1 which recruits X.campestris effector XopAC/AvrAC-mediated uridylylated PBL2 in the presence of ATP to form a wheel-like pentameric resistosome; this complex triggers immunity toward X.campestris in vascular tissues. Binds to RKS1 when uridylylated. Uridylylated at Ser-253 and Thr-254 by Xanthomonas campestris effector AvrAC/XopAC; this uridylylation is necessary for specific recruitment to RKS1 and to trigger immunity. Strongly expressed in leaves, moderately in roots, and barely in flowers, mostly in pedicels.

It is found in the cell membrane. The protein localises to the nucleus. It catalyses the reaction L-seryl-[protein] + ATP = O-phospho-L-seryl-[protein] + ADP + H(+). The catalysed reaction is L-threonyl-[protein] + ATP = O-phospho-L-threonyl-[protein] + ADP + H(+). Functionally, involved in disease resistance signaling. Contributes to pathogen-associated molecular pattern (PAMP)-triggered immunity (PTI) signaling and defense responses downstream of FLS2. Acts as a BIK1 decoy and enables Xanthomonas campestris AvrAC/XopAC detection; X.campestris effector AvrAC/XopAC-mediated uridylylation promotes the formation of a complex with RKS1 and RPP13L4/ZAR1 which, in turn, activates effector-triggered immunity (ETI) against X.campestris. Promotes, when uridylylated by AvrAC/XopAC, the release of ADP from the inactive RKS1-ZAR1 complex, thus activating the resistosome. The chain is Probable serine/threonine-protein kinase PBL2 from Arabidopsis thaliana (Mouse-ear cress).